Reading from the N-terminus, the 133-residue chain is Hemiptericin (133 aa).

Its function is as follows. Antibacterial peptide. Affects Gram-negative bacteria. In Pyrrhocoris apterus (Sap sucking bug), this protein is Hemiptericin.